The primary structure comprises 493 residues: NAD(P)H dehydrogenase (quinone) (493 aa).

FAD contacts are provided by residues 12–13, 35–37, 42–43, Lys52, Gly117, Asp317, 324–325, and Tyr450; these read PA, DCD, AA, and LA.

The protein belongs to the class-I pyridine nucleotide-disulfide oxidoreductase family. As to quaternary structure, homotetramer. It depends on FAD as a cofactor.

The catalysed reaction is a quinone + NADH + H(+) = a quinol + NAD(+). The enzyme catalyses a quinone + NADPH + H(+) = a quinol + NADP(+). Its function is as follows. May contribute to virulence by increasing resistance to reactive oxygen intermediates. It can reduce 2,6-dimethyl-1,4-benzoquinone (DMBQ), 5-hydroxy-1,4-naphthaquinone (5-HNQ) and menadione. In Mycobacterium tuberculosis (strain CDC 1551 / Oshkosh), this protein is NAD(P)H dehydrogenase (quinone) (lpdA).